A 73-amino-acid chain; its full sequence is uncharacterized protein (73 aa).

The protein belongs to the ycf40 family.

It is found in the plastid. Its subcellular location is the chloroplast. This is an uncharacterized protein from Trieres chinensis (Marine centric diatom).